The primary structure comprises 251 residues: Hydroxyacylglutathione hydrolase (251 aa).

7 residues coordinate Zn(2+): histidine 53, histidine 55, aspartate 57, histidine 58, histidine 110, aspartate 127, and histidine 165.

Belongs to the metallo-beta-lactamase superfamily. Glyoxalase II family. As to quaternary structure, monomer. Zn(2+) is required as a cofactor.

It catalyses the reaction an S-(2-hydroxyacyl)glutathione + H2O = a 2-hydroxy carboxylate + glutathione + H(+). Its pathway is secondary metabolite metabolism; methylglyoxal degradation; (R)-lactate from methylglyoxal: step 2/2. In terms of biological role, thiolesterase that catalyzes the hydrolysis of S-D-lactoyl-glutathione to form glutathione and D-lactic acid. The polypeptide is Hydroxyacylglutathione hydrolase (Shigella boydii serotype 4 (strain Sb227)).